Consider the following 212-residue polypeptide: Probable nicotinate-nucleotide adenylyltransferase (212 aa).

It belongs to the NadD family.

It catalyses the reaction nicotinate beta-D-ribonucleotide + ATP + H(+) = deamido-NAD(+) + diphosphate. It participates in cofactor biosynthesis; NAD(+) biosynthesis; deamido-NAD(+) from nicotinate D-ribonucleotide: step 1/1. Functionally, catalyzes the reversible adenylation of nicotinate mononucleotide (NaMN) to nicotinic acid adenine dinucleotide (NaAD). The sequence is that of Probable nicotinate-nucleotide adenylyltransferase from Chromobacterium violaceum (strain ATCC 12472 / DSM 30191 / JCM 1249 / CCUG 213 / NBRC 12614 / NCIMB 9131 / NCTC 9757 / MK).